The chain runs to 282 residues: V-set domain-containing T-cell activation inhibitor 1 (282 aa).

Positions 1-24 (MASLGQILFWSIISIIIILAGAIA) are cleaved as a signal peptide. The Extracellular segment spans residues 25 to 259 (LIIGFGISGR…HLQLLNSKAS (235 aa)). Ig-like V-type domains follow at residues 35–146 (HSIT…LEYK) and 153–241 (PEVN…IKVT). Disulfide bonds link C56–C130 and C168–C225. N216 carries an N-linked (GlcNAc...) asparagine glycan. The chain crosses the membrane as a helical span at residues 260–280 (LCVSSFFAISWALLPLSPYLM). The Cytoplasmic portion of the chain corresponds to 281–282 (LK).

The protein belongs to the immunoglobulin superfamily. BTN/MOG family. In terms of processing, N-glycosylated. Overexpressed in breast, ovarian, endometrial, renal cell (RCC) and non-small-cell lung cancers (NSCLC). Expressed on activated T- and B-cells, monocytes and dendritic cells, but not expressed in most normal tissues (at protein level). Widely expressed, including in kidney, liver, lung, ovary, placenta, spleen and testis.

The protein resides in the cell membrane. Its function is as follows. Negatively regulates T-cell-mediated immune response by inhibiting T-cell activation, proliferation, cytokine production and development of cytotoxicity. When expressed on the cell surface of tumor macrophages, plays an important role, together with regulatory T-cells (Treg), in the suppression of tumor-associated antigen-specific T-cell immunity. Involved in promoting epithelial cell transformation. The chain is V-set domain-containing T-cell activation inhibitor 1 from Homo sapiens (Human).